A 449-amino-acid chain; its full sequence is Zinc finger and BTB domain-containing protein 14 (449 aa).

A BTB domain is found at 36 to 102 (CDIAIVVEDV…MYTAKISVKK (67 aa)). Lys46 is covalently cross-linked (Glycyl lysine isopeptide (Lys-Gly) (interchain with G-Cter in SUMO2)). The Nuclear localization signal signature appears at 50-66 (HRCVLAACSTYFKKLFK). Residues 153-194 (GDAADTQDDDVEEIGDQDDSPSDDTVEGTPPSQEDGKSPTTT) form a disordered region. Residues 157-178 (DTQDDDVEEIGDQDDSPSDDTV) are compositionally biased toward acidic residues. Glycyl lysine isopeptide (Lys-Gly) (interchain with G-Cter in SUMO2) cross-links involve residues Lys203 and Lys249. 5 C2H2-type zinc fingers span residues 277–304 (IACQ…ADRP), 305–332 (FVCE…GYKP), 333–360 (YSCE…NERP), 361–388 (FACH…GEKP), and 389–417 (FVCG…ERKQ).

This sequence belongs to the krueppel C2H2-type zinc-finger protein family. As to quaternary structure, interacts with ZBTB21.

The protein localises to the nucleus. Functionally, transcriptional activator of the dopamine transporter (DAT), binding it's promoter at the consensus sequence 5'-CCTGCACAGTTCACGGA-3'. Binds to 5'-d(GCC)(n)-3' trinucleotide repeats in promoter regions and acts as a repressor of the FMR1 gene. Transcriptional repressor of MYC and thymidine kinase promoters. The sequence is that of Zinc finger and BTB domain-containing protein 14 (ZBTB14) from Homo sapiens (Human).